A 509-amino-acid polypeptide reads, in one-letter code: Cardiolipin synthase 1 (509 aa).

The next 3 membrane-spanning stretches (helical) occupy residues 4–24 (PIIQ…LLNT), 30–50 (YTFV…VIFI), and 59–79 (LAWF…YSIF). PLD phosphodiesterase domains lie at 238-265 (VNYR…GDEY) and 422-449 (KDGF…DVRS). Active-site residues include H243, K245, D250, H427, K429, and D434.

This sequence belongs to the phospholipase D family. Cardiolipin synthase subfamily.

Its subcellular location is the cell membrane. The catalysed reaction is 2 a 1,2-diacyl-sn-glycero-3-phospho-(1'-sn-glycerol) = a cardiolipin + glycerol. Catalyzes the reversible phosphatidyl group transfer from one phosphatidylglycerol molecule to another to form cardiolipin (CL) (diphosphatidylglycerol) and glycerol. This is Cardiolipin synthase 1 (cls1) from Bacillus anthracis.